A 91-amino-acid chain; its full sequence is Ice-structuring protein (91 aa).

The first 21 residues, 1-21, serve as a signal peptide directing secretion; sequence MALSLFTVGQLIFLFWTMRIT. Positions 22-39 are cleaved as a propeptide — removed by a dipeptidylpeptidase; sequence EANPDPAAKAVPAAAAPD.

It belongs to the type-I AFP family.

It is found in the secreted. Contributes to protect fish blood from freezing at subzero sea water temperatures. Lowers the blood freezing point. Binds to nascent ice crystals and prevents further growth. The chain is Ice-structuring protein from Pseudopleuronectes americanus (Winter flounder).